We begin with the raw amino-acid sequence, 206 residues long: Superoxide dismutase [Mn] (206 aa).

4 residues coordinate Mn(2+): His-30, His-78, Asp-166, and His-170.

Belongs to the iron/manganese superoxide dismutase family. As to quaternary structure, homodimer. Mn(2+) serves as cofactor.

The enzyme catalyses 2 superoxide + 2 H(+) = H2O2 + O2. In terms of biological role, destroys superoxide anion radicals which are normally produced within the cells and which are toxic to biological systems. The sequence is that of Superoxide dismutase [Mn] (sodA) from Chlamydia trachomatis serovar D (strain ATCC VR-885 / DSM 19411 / UW-3/Cx).